Here is a 526-residue protein sequence, read N- to C-terminus: Glutamate--tRNA ligase, mitochondrial (526 aa).

The N-terminal 38 residues, 1 to 38 (MLSYTSCAKLICSRYIVSKISFYSLKRCNSTAVVRTRF), are a transit peptide targeting the mitochondrion. 37–39 (RFA) contributes to the L-glutamate binding site. A 'HIGH' region motif is present at residues 42 to 50 (PTGFLHLGS). Position 47 (His-47) interacts with ATP. L-glutamate is bound by residues Glu-73, 222–226 (YHFAN), and Arg-240. ATP contacts are provided by residues Glu-243 and 278 to 282 (KLSKR). The 'KMSKS' region motif lies at 278–282 (KLSKR).

This sequence belongs to the class-I aminoacyl-tRNA synthetase family. Glutamate--tRNA ligase type 1 subfamily.

The protein resides in the mitochondrion. The enzyme catalyses tRNA(Glu) + L-glutamate + ATP = L-glutamyl-tRNA(Glu) + AMP + diphosphate. Functionally, catalyzes the attachment of glutamate to tRNA(Glu) in a two-step reaction: glutamate is first activated by ATP to form Glu-AMP and then transferred to the acceptor end of tRNA(Glu). The chain is Glutamate--tRNA ligase, mitochondrial (mse1) from Schizosaccharomyces pombe (strain 972 / ATCC 24843) (Fission yeast).